Reading from the N-terminus, the 353-residue chain is UDP-galactose transporter (353 aa).

6 consecutive transmembrane segments (helical) span residues 147–167, 184–204, 215–235, 254–274, 279–299, and 302–322; these read LGPMKWFSLFLLTGGIAIVQL, VTGFSAVLVACLISGLAGVYF, LWVRNVQLSFFSLFPCLFTIL, IVWLAILLQAGGGIIVALCVA, IMKNFSTSISIIISSLASVYL, and FKISLTFLIGVMLVIAATFLY. The interval 325–353 is disordered; it reads PESKPSPSRGTYIPMTTQDAAAKDVDHKH. Over residues 329–343 the composition is skewed to polar residues; it reads PSPSRGTYIPMTTQD.

It belongs to the nucleotide-sugar transporter family. SLC35A subfamily.

Its subcellular location is the golgi apparatus membrane. In terms of biological role, essential for the transport of UDP-galactose into the lumen of Golgi apparatus. The sequence is that of UDP-galactose transporter (gms1) from Schizosaccharomyces pombe (strain 972 / ATCC 24843) (Fission yeast).